A 450-amino-acid polypeptide reads, in one-letter code: tRNA-2-methylthio-N(6)-dimethylallyladenosine synthase (450 aa).

Positions 3 to 119 (RRYYITTFGC…LGELLEQVWN (117 aa)) constitute an MTTase N-terminal domain. Residues C12, C48, C82, C154, C158, and C161 each contribute to the [4Fe-4S] cluster site. In terms of domain architecture, Radical SAM core spans 140–377 (RDSTVTAWVN…NHLVAKIAGD (238 aa)). The region spanning 380–444 (QRYLGREEVV…AFSLSGVPLA (65 aa)) is the TRAM domain.

It belongs to the methylthiotransferase family. MiaB subfamily. As to quaternary structure, monomer. [4Fe-4S] cluster serves as cofactor.

Its subcellular location is the cytoplasm. It carries out the reaction N(6)-dimethylallyladenosine(37) in tRNA + (sulfur carrier)-SH + AH2 + 2 S-adenosyl-L-methionine = 2-methylsulfanyl-N(6)-dimethylallyladenosine(37) in tRNA + (sulfur carrier)-H + 5'-deoxyadenosine + L-methionine + A + S-adenosyl-L-homocysteine + 2 H(+). In terms of biological role, catalyzes the methylthiolation of N6-(dimethylallyl)adenosine (i(6)A), leading to the formation of 2-methylthio-N6-(dimethylallyl)adenosine (ms(2)i(6)A) at position 37 in tRNAs that read codons beginning with uridine. The sequence is that of tRNA-2-methylthio-N(6)-dimethylallyladenosine synthase from Thermosynechococcus vestitus (strain NIES-2133 / IAM M-273 / BP-1).